Reading from the N-terminus, the 234-residue chain is Phosphoglycolate phosphatase (234 aa).

The active-site Nucleophile is the Asp-8. Residues Asp-8 and Asp-10 each coordinate Mg(2+). Lys-157 is a substrate binding site. Positions 180 and 184 each coordinate Mg(2+).

Belongs to the archaeal SPP-like hydrolase family. Requires Mg(2+) as cofactor.

It carries out the reaction 2-phosphoglycolate + H2O = glycolate + phosphate. In terms of biological role, catalyzes the dephosphorylation of 2-phosphoglycolate. This is Phosphoglycolate phosphatase from Methanoculleus marisnigri (strain ATCC 35101 / DSM 1498 / JR1).